Reading from the N-terminus, the 130-residue chain is Small ribosomal subunit protein uS11c (130 aa).

Belongs to the universal ribosomal protein uS11 family. In terms of assembly, part of the 30S ribosomal subunit.

The protein resides in the plastid. Its subcellular location is the chloroplast. The protein is Small ribosomal subunit protein uS11c of Trieres chinensis (Marine centric diatom).